The chain runs to 421 residues: Testin (421 aa).

Residues M92–D199 enclose the PET domain. Positions E133–C164 are disordered. The segment covering P155 to C164 has biased composition (basic and acidic residues). 3 LIM zinc-binding domains span residues Y234–E297, P299–V359, and Q362–S421.

This sequence belongs to the prickle / espinas / testin family. In terms of assembly, interacts via LIM domain 1 with ZYX. Interacts (via LIM domain 3) with ENAH and VASP. Interacts with ALKBH4, talin, actin, alpha-actinin, GRIP1 and PXN. Interacts (via LIM domain 2) with ACTL7A (via N-terminus). Heterodimer with ACTL7A; the heterodimer interacts with ENAH to form a heterotrimer.

It localises to the cytoplasm. It is found in the cell junction. The protein resides in the focal adhesion. Its function is as follows. Scaffold protein that may play a role in cell adhesion, cell spreading and in the reorganization of the actin cytoskeleton. Plays a role in the regulation of cell proliferation. May act as a tumor suppressor. The protein is Testin (TES) of Plecturocebus moloch (Dusky titi monkey).